The chain runs to 104 residues: MTNRLTLSGTVCRAPLRKVSPSGIPHCQFVLEHRSVQEEAGFHRQAWCQMPVIVSGHENQAITHSITVGSRITVQGFISCHKAKNGLSKMVLHAEQIELIDSGD.

The SSB domain maps to 1-101 (MTNRLTLSGT…LHAEQIELID (101 aa)).

This sequence belongs to the PriB family. In terms of assembly, homodimer. Interacts with PriA and DnaT. Component of the replication restart primosome. Primosome assembly occurs via a 'hand-off' mechanism. PriA binds to replication forks, subsequently PriB then DnaT bind; DnaT then displaces ssDNA to generate the helicase loading substrate.

Its function is as follows. Involved in the restart of stalled replication forks, which reloads the replicative helicase on sites other than the origin of replication; the PriA-PriB pathway is the major replication restart pathway. During primosome assembly it facilitates complex formation between PriA and DnaT on DNA; stabilizes PriA on DNA. Stimulates the DNA unwinding activity of PriA helicase. This is Replication restart protein PriB from Salmonella typhi.